Here is a 397-residue protein sequence, read N- to C-terminus: Stearoyl-[acyl-carrier-protein] 9-desaturase, chloroplastic (397 aa).

A chloroplast-targeting transit peptide spans 1–33; the sequence is MALNFNAIASKSQKLPCFALPPKATLRSPKFSM. Positions 138, 176, 179, 229, 262, and 265 each coordinate Fe cation.

Belongs to the fatty acid desaturase type 2 family. In terms of assembly, homodimer. Fe(2+) serves as cofactor.

It localises to the plastid. It is found in the chloroplast. The enzyme catalyses octadecanoyl-[ACP] + 2 reduced [2Fe-2S]-[ferredoxin] + O2 + 2 H(+) = (9Z)-octadecenoyl-[ACP] + 2 oxidized [2Fe-2S]-[ferredoxin] + 2 H2O. It participates in lipid metabolism; fatty acid metabolism. Its function is as follows. Converts stearoyl-ACP to oleoyl-ACP by introduction of a cis double bond between carbons 9 and 10 of the acyl chain. In Gossypium hirsutum (Upland cotton), this protein is Stearoyl-[acyl-carrier-protein] 9-desaturase, chloroplastic.